Consider the following 505-residue polypeptide: uncharacterized protein (505 aa).

A helical membrane pass occupies residues 11-27 (IGIIGGGIVGWLAAIAL).

Its subcellular location is the membrane. This is an uncharacterized protein from Sinorhizobium fredii (strain NBRC 101917 / NGR234).